The primary structure comprises 335 residues: Pyridoxal 5'-phosphate synthase subunit PdxS (335 aa).

D30 serves as a coordination point for D-ribose 5-phosphate. The active-site Schiff-base intermediate with D-ribose 5-phosphate is the K87. A D-ribose 5-phosphate-binding site is contributed by G159. R171 provides a ligand contact to D-glyceraldehyde 3-phosphate. D-ribose 5-phosphate-binding positions include G257 and 278–279 (GS).

The protein belongs to the PdxS/SNZ family. In terms of assembly, homohexamer. In the presence of PdxT, forms a dodecamer of heterodimers.

The enzyme catalyses aldehydo-D-ribose 5-phosphate + D-glyceraldehyde 3-phosphate + L-glutamine = pyridoxal 5'-phosphate + L-glutamate + phosphate + 3 H2O + H(+). The protein operates within cofactor biosynthesis; pyridoxal 5'-phosphate biosynthesis. Catalyzes the formation of pyridoxal 5'-phosphate from ribose 5-phosphate (RBP), glyceraldehyde 3-phosphate (G3P) and ammonia. The ammonia is provided by the PdxT subunit. Can also use ribulose 5-phosphate and dihydroxyacetone phosphate as substrates, resulting from enzyme-catalyzed isomerization of RBP and G3P, respectively. This is Pyridoxal 5'-phosphate synthase subunit PdxS from Pyrococcus horikoshii (strain ATCC 700860 / DSM 12428 / JCM 9974 / NBRC 100139 / OT-3).